We begin with the raw amino-acid sequence, 175 residues long: Ribosome maturation factor RimM (175 aa).

The PRC barrel domain occupies 98–175; it reads EGEYYWHQLE…EMRVDWDADF (78 aa).

The protein belongs to the RimM family. In terms of assembly, binds ribosomal protein uS19.

The protein resides in the cytoplasm. An accessory protein needed during the final step in the assembly of 30S ribosomal subunit, possibly for assembly of the head region. Essential for efficient processing of 16S rRNA. May be needed both before and after RbfA during the maturation of 16S rRNA. It has affinity for free ribosomal 30S subunits but not for 70S ribosomes. The protein is Ribosome maturation factor RimM of Pseudomonas aeruginosa (strain UCBPP-PA14).